The sequence spans 416 residues: 5-hydroxytryptamine receptor 1A-beta (416 aa).

At 1–35 (MEGTNNTTGWTHFDSTSNRTSKSFDEEVKLSYQVV) the chain is on the extracellular side. N-linked (GlcNAc...) asparagine glycans are attached at residues asparagine 5, asparagine 6, and asparagine 18. Residues 36-56 (TSFLLGALILCSIFGNACVVA) form a helical membrane-spanning segment. Topologically, residues 57–70 (AIALERSLQNVANY) are cytoplasmic. The helical transmembrane segment at 71 to 95 (LIGSLAVTDLMVSVLVLPMAALYQV) threads the bilayer. Residues 96-104 (LNRWTLGQI) are Extracellular-facing. Residues 105–129 (PCDIFISLDMLCCTSSILHLCVIAL) form a helical membrane-spanning segment. Cysteines 106 and 189 form a disulfide. Serotonin contacts are provided by aspartate 113 and cysteine 117. The short motif at 130-132 (DRY) is the DRY motif; important for ligand-induced conformation changes element. At 130–149 (DRYWAITEPIDYMKKRTPRR) the chain is on the cytoplasmic side. The chain crosses the membrane as a helical span at residues 150–171 (AAVLISVTWLVGFSISIPPMLI). Residues 172–195 (MRSQPSSMAEDRANSKQCKITQDP) lie on the Extracellular side of the membrane. The helical transmembrane segment at 196–218 (WYTIYSTFGAFYIPLTLMLVLYG) threads the bilayer. The Cytoplasmic portion of the chain corresponds to 219–340 (RIFKAARFRI…LARERKTVKT (122 aa)). 1D-myo-inositol 4-phosphate contacts are provided by lysine 339, threonine 340, and glycine 346. A helical membrane pass occupies residues 341 to 364 (LGIIMGTFILCWLPFFIVALVMPF). The Extracellular segment spans residues 365 to 372 (CQESCFMP). A helical membrane pass occupies residues 373 to 397 (HWLKDVINWLGYSNSLLNPIIYAYF). Positions 390 to 394 (NPIIY) match the NPxxY motif; important for ligand-induced conformation changes and signaling motif. Residues phenylalanine 397, asparagine 398, and lysine 399 each coordinate 1D-myo-inositol 4-phosphate. Residues 398–416 (NKDFQSAFKKIIKCHFCRA) lie on the Cytoplasmic side of the membrane.

The protein belongs to the G-protein coupled receptor 1 family. 5-hydroxytryptamine receptor subfamily.

It localises to the cell membrane. With respect to regulation, G-protein coupled receptor activity is regulated by lipids: phosphatidylinositol 4-phosphate increases HTR1A-mediated activity. G-protein coupled receptor for 5-hydroxytryptamine (serotonin). Also functions as a receptor for various drugs and psychoactive substances. Ligand binding causes a conformation change that triggers signaling via guanine nucleotide-binding proteins (G proteins) and modulates the activity of downstream effectors, such as adenylate cyclase. HTR1A is coupled to G(i)/G(o) G alpha proteins and mediates inhibitory neurotransmission: signaling inhibits adenylate cyclase activity and activates a phosphatidylinositol-calcium second messenger system that regulates the release of Ca(2+) ions from intracellular stores. Beta-arrestin family members regulate signaling by mediating both receptor desensitization and resensitization processes. This is 5-hydroxytryptamine receptor 1A-beta (htr1a-B) from Takifugu rubripes (Japanese pufferfish).